Here is a 254-residue protein sequence, read N- to C-terminus: 5-oxoprolinase subunit A 1 (254 aa).

Belongs to the LamB/PxpA family. In terms of assembly, forms a complex composed of PxpA, PxpB and PxpC.

The enzyme catalyses 5-oxo-L-proline + ATP + 2 H2O = L-glutamate + ADP + phosphate + H(+). Its function is as follows. Catalyzes the cleavage of 5-oxoproline to form L-glutamate coupled to the hydrolysis of ATP to ADP and inorganic phosphate. The chain is 5-oxoprolinase subunit A 1 from Burkholderia pseudomallei (strain K96243).